A 99-amino-acid chain; its full sequence is Large ribosomal subunit protein uL23 (99 aa).

Belongs to the universal ribosomal protein uL23 family. In terms of assembly, part of the 50S ribosomal subunit. Contacts protein L29, and trigger factor when it is bound to the ribosome.

In terms of biological role, one of the early assembly proteins it binds 23S rRNA. One of the proteins that surrounds the polypeptide exit tunnel on the outside of the ribosome. Forms the main docking site for trigger factor binding to the ribosome. The sequence is that of Large ribosomal subunit protein uL23 from Rhodopseudomonas palustris (strain HaA2).